Reading from the N-terminus, the 337-residue chain is RNA 3'-terminal phosphate cyclase (337 aa).

Residues glutamine 101 and 282-285 (HMSD) each bind ATP. Residue histidine 306 is the Tele-AMP-histidine intermediate of the active site.

It belongs to the RNA 3'-terminal cyclase family. Type 1 subfamily.

The protein localises to the cytoplasm. It carries out the reaction a 3'-end 3'-phospho-ribonucleotide-RNA + ATP = a 3'-end 2',3'-cyclophospho-ribonucleotide-RNA + AMP + diphosphate. Its function is as follows. Catalyzes the conversion of 3'-phosphate to a 2',3'-cyclic phosphodiester at the end of RNA. The mechanism of action of the enzyme occurs in 3 steps: (A) adenylation of the enzyme by ATP; (B) transfer of adenylate to an RNA-N3'P to produce RNA-N3'PP5'A; (C) and attack of the adjacent 2'-hydroxyl on the 3'-phosphorus in the diester linkage to produce the cyclic end product. The biological role of this enzyme is unknown but it is likely to function in some aspects of cellular RNA processing. This is RNA 3'-terminal phosphate cyclase (rtcA) from Saccharolobus solfataricus (strain ATCC 35092 / DSM 1617 / JCM 11322 / P2) (Sulfolobus solfataricus).